A 221-amino-acid chain; its full sequence is ATP phosphoribosyltransferase (221 aa).

It belongs to the ATP phosphoribosyltransferase family. Short subfamily. Heteromultimer composed of HisG and HisZ subunits.

It is found in the cytoplasm. The catalysed reaction is 1-(5-phospho-beta-D-ribosyl)-ATP + diphosphate = 5-phospho-alpha-D-ribose 1-diphosphate + ATP. It functions in the pathway amino-acid biosynthesis; L-histidine biosynthesis; L-histidine from 5-phospho-alpha-D-ribose 1-diphosphate: step 1/9. In terms of biological role, catalyzes the condensation of ATP and 5-phosphoribose 1-diphosphate to form N'-(5'-phosphoribosyl)-ATP (PR-ATP). Has a crucial role in the pathway because the rate of histidine biosynthesis seems to be controlled primarily by regulation of HisG enzymatic activity. In Symbiobacterium thermophilum (strain DSM 24528 / JCM 14929 / IAM 14863 / T), this protein is ATP phosphoribosyltransferase.